We begin with the raw amino-acid sequence, 156 residues long: Ribosome maturation factor RimP (156 aa).

This sequence belongs to the RimP family.

The protein resides in the cytoplasm. In terms of biological role, required for maturation of 30S ribosomal subunits. The sequence is that of Ribosome maturation factor RimP from Lachnospira eligens (strain ATCC 27750 / DSM 3376 / VPI C15-48 / C15-B4) (Eubacterium eligens).